Consider the following 111-residue polypeptide: Large ribosomal subunit protein uL24 (111 aa).

The disordered stretch occupies residues Asn85–Gln111. Over residues Asp88–Gln111 the composition is skewed to basic and acidic residues.

This sequence belongs to the universal ribosomal protein uL24 family. In terms of assembly, part of the 50S ribosomal subunit.

In terms of biological role, one of two assembly initiator proteins, it binds directly to the 5'-end of the 23S rRNA, where it nucleates assembly of the 50S subunit. Located at the polypeptide exit tunnel on the outside of the subunit. This Metallosphaera sedula (strain ATCC 51363 / DSM 5348 / JCM 9185 / NBRC 15509 / TH2) protein is Large ribosomal subunit protein uL24.